The primary structure comprises 243 residues: Phosphoribosylaminoimidazole-succinocarboxamide synthase (243 aa).

Belongs to the SAICAR synthetase family.

The catalysed reaction is 5-amino-1-(5-phospho-D-ribosyl)imidazole-4-carboxylate + L-aspartate + ATP = (2S)-2-[5-amino-1-(5-phospho-beta-D-ribosyl)imidazole-4-carboxamido]succinate + ADP + phosphate + 2 H(+). Its pathway is purine metabolism; IMP biosynthesis via de novo pathway; 5-amino-1-(5-phospho-D-ribosyl)imidazole-4-carboxamide from 5-amino-1-(5-phospho-D-ribosyl)imidazole-4-carboxylate: step 1/2. The chain is Phosphoribosylaminoimidazole-succinocarboxamide synthase from Methanobrevibacter smithii (strain ATCC 35061 / DSM 861 / OCM 144 / PS).